The primary structure comprises 693 residues: Subtilisin-like protease SBT4.10 (693 aa).

Residues 1 to 25 (MAKLREASFCALACVLVLFLSFVSA) form the signal peptide. The propeptide at 26-113 (DTYNRQDKQV…VFPSKKYKLH (88 aa)) is activation peptide. An Inhibitor I9 domain is found at 35 to 113 (VYVVYMGSLP…VFPSKKYKLH (79 aa)). Residues 117–536 (SWDFMGLKEG…SGHIDPIAAI (420 aa)) enclose the Peptidase S8 domain. Asp-145 (charge relay system) is an active-site residue. Asn-176 carries an N-linked (GlcNAc...) asparagine glycan. Catalysis depends on His-200, which acts as the Charge relay system. N-linked (GlcNAc...) asparagine glycosylation is found at Asn-215, Asn-223, Asn-368, Asn-413, and Asn-467. The PA domain maps to 354-396 (QYPLVYETSVEKCNNESLTTLALSFLTLTPQSNEQIISMFHTL). Ser-475 (charge relay system) is an active-site residue. N-linked (GlcNAc...) asparagine glycosylation is found at Asn-559, Asn-603, and Asn-613.

It belongs to the peptidase S8 family. Post-translationally, the C-terminal propeptide is autocleaved.

Its subcellular location is the secreted. The protein is Subtilisin-like protease SBT4.10 of Arabidopsis thaliana (Mouse-ear cress).